The chain runs to 74 residues: MSTALAKPQMRGLLARRLRFHIVGAFMVSLGFATFYKFAVAEKRKKAYADFYRNYDSMKDFEEMRKAGIFQSAK.

Over 2-12 the chain is Mitochondrial matrix; sequence STALAKPQMRG. A helical membrane pass occupies residues 13–53; sequence LLARRLRFHIVGAFMVSLGFATFYKFAVAEKRKKAYADFYR. Residues 54-74 are Mitochondrial intermembrane-facing; the sequence is NYDSMKDFEEMRKAGIFQSAK.

The protein belongs to the cytochrome c oxidase subunit 6c family. As to quaternary structure, component of the cytochrome c oxidase (complex IV, CIV), a multisubunit enzyme composed of 14 subunits. The complex is composed of a catalytic core of 3 subunits MT-CO1, MT-CO2 and MT-CO3, encoded in the mitochondrial DNA, and 11 supernumerary subunits COX4I1 (or COX4I2), COX5A, COX5B, COX6A2 (or COX6A1), COX6B1 (or COX6B2), COX6C, COX7A1 (or COX7A2), COX7B, COX7C, COX8B and NDUFA4, which are encoded in the nuclear genome. The complex exists as a monomer or a dimer and forms supercomplexes (SCs) in the inner mitochondrial membrane with NADH-ubiquinone oxidoreductase (complex I, CI) and ubiquinol-cytochrome c oxidoreductase (cytochrome b-c1 complex, complex III, CIII), resulting in different assemblies (supercomplex SCI(1)III(2)IV(1) and megacomplex MCI(2)III(2)IV(2)).

Its subcellular location is the mitochondrion inner membrane. It functions in the pathway energy metabolism; oxidative phosphorylation. Component of the cytochrome c oxidase, the last enzyme in the mitochondrial electron transport chain which drives oxidative phosphorylation. The respiratory chain contains 3 multisubunit complexes succinate dehydrogenase (complex II, CII), ubiquinol-cytochrome c oxidoreductase (cytochrome b-c1 complex, complex III, CIII) and cytochrome c oxidase (complex IV, CIV), that cooperate to transfer electrons derived from NADH and succinate to molecular oxygen, creating an electrochemical gradient over the inner membrane that drives transmembrane transport and the ATP synthase. Cytochrome c oxidase is the component of the respiratory chain that catalyzes the reduction of oxygen to water. Electrons originating from reduced cytochrome c in the intermembrane space (IMS) are transferred via the dinuclear copper A center (CU(A)) of subunit 2 and heme A of subunit 1 to the active site in subunit 1, a binuclear center (BNC) formed by heme A3 and copper B (CU(B)). The BNC reduces molecular oxygen to 2 water molecules using 4 electrons from cytochrome c in the IMS and 4 protons from the mitochondrial matrix. This is Cytochrome c oxidase subunit 6C (COX6C) from Bos taurus (Bovine).